Reading from the N-terminus, the 179-residue chain is Repressor of phase 1 flagellin gene (179 aa).

Functionally, transcriptional repressor of the FliC phase-1 flagellin. In Salmonella typhimurium (strain LT2 / SGSC1412 / ATCC 700720), this protein is Repressor of phase 1 flagellin gene (fljA).